The primary structure comprises 155 residues: 6,7-dimethyl-8-ribityllumazine synthase (155 aa).

Residues tryptophan 24, 58 to 60 (AFE), and 82 to 84 (AVI) each bind 5-amino-6-(D-ribitylamino)uracil. 87–88 (GT) serves as a coordination point for (2S)-2-hydroxy-3-oxobutyl phosphate. Histidine 90 acts as the Proton donor in catalysis. Phenylalanine 115 lines the 5-amino-6-(D-ribitylamino)uracil pocket. (2S)-2-hydroxy-3-oxobutyl phosphate is bound at residue arginine 129.

It belongs to the DMRL synthase family. As to quaternary structure, forms an icosahedral capsid composed of 60 subunits, arranged as a dodecamer of pentamers.

The enzyme catalyses (2S)-2-hydroxy-3-oxobutyl phosphate + 5-amino-6-(D-ribitylamino)uracil = 6,7-dimethyl-8-(1-D-ribityl)lumazine + phosphate + 2 H2O + H(+). The protein operates within cofactor biosynthesis; riboflavin biosynthesis; riboflavin from 2-hydroxy-3-oxobutyl phosphate and 5-amino-6-(D-ribitylamino)uracil: step 1/2. Functionally, catalyzes the formation of 6,7-dimethyl-8-ribityllumazine by condensation of 5-amino-6-(D-ribitylamino)uracil with 3,4-dihydroxy-2-butanone 4-phosphate. This is the penultimate step in the biosynthesis of riboflavin. This chain is 6,7-dimethyl-8-ribityllumazine synthase, found in Saccharophagus degradans (strain 2-40 / ATCC 43961 / DSM 17024).